A 160-amino-acid chain; its full sequence is Large ribosomal subunit protein uL30m (160 aa).

The N-terminal 34 residues, 1 to 34, are a transit peptide targeting the mitochondrion; it reads MAGVLRSAFPRPPCRLQTVKKGAESLIGTEWIRH. Residues 44-64 form a disordered region; it reads KVFQPKPEDHEKYGGDPQNPH.

It belongs to the universal ribosomal protein uL30 family. Component of the mitochondrial ribosome large subunit (39S) which comprises a 16S rRNA and about 50 distinct proteins.

The protein resides in the mitochondrion. This is Large ribosomal subunit protein uL30m (Mrpl30) from Mus musculus (Mouse).